The primary structure comprises 847 residues: Alanine--tRNA ligase (847 aa).

Positions 554, 558, 656, and 660 each coordinate Zn(2+).

It belongs to the class-II aminoacyl-tRNA synthetase family. The cofactor is Zn(2+).

It localises to the cytoplasm. It catalyses the reaction tRNA(Ala) + L-alanine + ATP = L-alanyl-tRNA(Ala) + AMP + diphosphate. In terms of biological role, catalyzes the attachment of alanine to tRNA(Ala) in a two-step reaction: alanine is first activated by ATP to form Ala-AMP and then transferred to the acceptor end of tRNA(Ala). Also edits incorrectly charged Ser-tRNA(Ala) and Gly-tRNA(Ala) via its editing domain. This Helicobacter pylori (strain J99 / ATCC 700824) (Campylobacter pylori J99) protein is Alanine--tRNA ligase.